The following is a 797-amino-acid chain: Adhesion G-protein coupled receptor G7 (797 aa).

The signal sequence occupies residues 1-26; sequence MASCRAWNLRVLVAVVCGLLTGIILG. Topologically, residues 27–438 are extracellular; sequence LGIWRIVIRI…QYPKSLDILS (412 aa). N-linked (GlcNAc...) asparagine glycans are attached at residues N82, N159, N178, N191, N247, N261, N312, N316, and N387. The GAIN-B domain maps to 275-428; it reads FSVQKGASSS…AVLMTFKKDY (154 aa). Cystine bridges form between C383–C410 and C398–C412. The GPS stretch occupies residues 383–428; it reads CVYWNLSAKDWDTYGCQKDKGTDGFLRCRCNHTTNFAVLMTFKKDY. N413 carries an N-linked (GlcNAc...) asparagine glycan. The chain crosses the membrane as a helical span at residues 439 to 459; that stretch reads NVGCALSVTGLALTVIFQIVT. At 460-468 the chain is on the cytoplasmic side; that stretch reads RKVRKTSVT. The chain crosses the membrane as a helical span at residues 469 to 489; that stretch reads WVLVNLCISMLIFNLLFVFGI. Residues 490-528 lie on the Extracellular side of the membrane; the sequence is ENSNKNLQTSDGDINNIDFDNNDIPRTDTINIPNPMCTA. Residues 529–549 form a helical membrane-spanning segment; it reads IAALLHYFLLVTFTWNALSAA. Residues 550–565 lie on the Cytoplasmic side of the membrane; sequence QLYYLLIRTMKPLPRH. The helical transmembrane segment at 566–586 threads the bilayer; the sequence is FILFISLIGWGVPAIVVAITV. The Extracellular segment spans residues 587–623; that stretch reads GVIYSQNGNNPQWELDYRQEKICWLAIPEPNGVIKSP. The helical transmembrane segment at 624-644 threads the bilayer; it reads LLWSFIVPVTIILISNVVMFI. The Cytoplasmic segment spans residues 645–669; that stretch reads TISIKVLWKNNQNLTSTKKVSSMKK. A helical membrane pass occupies residues 670–690; sequence IVSTLSVAVVFGITWILAYLM. At 691 to 698 the chain is on the extracellular side; that stretch reads LVNDDSIR. A helical membrane pass occupies residues 699 to 719; that stretch reads IVFSYIFCLFNTTQGLQIFIL. Over 720–797 the chain is Cytoplasmic; sequence YTVRTKVFQS…SESDNAKESI (78 aa).

The protein belongs to the G-protein coupled receptor 2 family. Adhesion G-protein coupled receptor (ADGR) subfamily.

It is found in the membrane. Functionally, orphan receptor. This is Adhesion G-protein coupled receptor G7 (ADGRG7) from Homo sapiens (Human).